A 116-amino-acid polypeptide reads, in one-letter code: Large ribosomal subunit protein bL17 (116 aa).

This sequence belongs to the bacterial ribosomal protein bL17 family. As to quaternary structure, part of the 50S ribosomal subunit. Contacts protein L32.

The sequence is that of Large ribosomal subunit protein bL17 from Prochlorococcus marinus (strain MIT 9301).